The sequence spans 452 residues: Photoreceptor ankyrin repeat protein (452 aa).

ANK repeat units lie at residues 94–123 (CRLG…SPEE), 130–160 (NGRT…DVNQ), 164–193 (GGDT…GLDL), and 223–257 (RGKT…QLSQ). Disordered stretches follow at residues 335 to 369 (LGTR…SPWV) and 405 to 427 (SKAS…QSLA). Residues 349–362 (APPPPLVPQSPPGS) are compositionally biased toward pro residues. The segment covering 406-424 (KASSSSHQCQPKPSPSGHQ) has biased composition (polar residues).

The protein resides in the cytoplasm. The protein localises to the cytosol. Its subcellular location is the nucleus. Functionally, acts as a transcriptional repressor for CRX-activated photoreceptor gene regulation. The chain is Photoreceptor ankyrin repeat protein from Homo sapiens (Human).